A 138-amino-acid chain; its full sequence is Small ribosomal subunit protein uS11c (138 aa).

Positions 1–22 (MAKAIPKISSRRNGRISSRKGA) are disordered. Residues 9-22 (SSRRNGRISSRKGA) are compositionally biased toward basic residues.

It belongs to the universal ribosomal protein uS11 family. In terms of assembly, part of the 30S ribosomal subunit.

Its subcellular location is the plastid. The protein localises to the chloroplast. The protein is Small ribosomal subunit protein uS11c of Solanum bulbocastanum (Wild potato).